The chain runs to 256 residues: Triosephosphate isomerase (256 aa).

12–14 provides a ligand contact to substrate; sequence NWK. His-99 acts as the Electrophile in catalysis. Catalysis depends on Glu-169, which acts as the Proton acceptor. Substrate contacts are provided by residues Gly-175, Ser-214, and 235-236; that span reads GG.

This sequence belongs to the triosephosphate isomerase family. In terms of assembly, homodimer.

It is found in the cytoplasm. The enzyme catalyses D-glyceraldehyde 3-phosphate = dihydroxyacetone phosphate. Its pathway is carbohydrate biosynthesis; gluconeogenesis. It participates in carbohydrate degradation; glycolysis; D-glyceraldehyde 3-phosphate from glycerone phosphate: step 1/1. Its function is as follows. Involved in the gluconeogenesis. Catalyzes stereospecifically the conversion of dihydroxyacetone phosphate (DHAP) to D-glyceraldehyde-3-phosphate (G3P). The protein is Triosephosphate isomerase of Rhizobium meliloti (strain 1021) (Ensifer meliloti).